The primary structure comprises 404 residues: Cysteine desulfurase IscS (404 aa).

Residues 75–76, asparagine 155, glutamine 183, and 203–205 contribute to the pyridoxal 5'-phosphate site; these read AT and SAH. Position 206 is an N6-(pyridoxal phosphate)lysine (lysine 206). Position 243 (threonine 243) interacts with pyridoxal 5'-phosphate. Cysteine 328 serves as the catalytic Cysteine persulfide intermediate. Cysteine 328 lines the [2Fe-2S] cluster pocket.

It belongs to the class-V pyridoxal-phosphate-dependent aminotransferase family. NifS/IscS subfamily. In terms of assembly, homodimer. Forms a heterotetramer with IscU, interacts with other sulfur acceptors. Pyridoxal 5'-phosphate serves as cofactor.

It localises to the cytoplasm. It catalyses the reaction (sulfur carrier)-H + L-cysteine = (sulfur carrier)-SH + L-alanine. The protein operates within cofactor biosynthesis; iron-sulfur cluster biosynthesis. Its function is as follows. Master enzyme that delivers sulfur to a number of partners involved in Fe-S cluster assembly, tRNA modification or cofactor biosynthesis. Catalyzes the removal of elemental sulfur atoms from cysteine to produce alanine. Functions as a sulfur delivery protein for Fe-S cluster synthesis onto IscU, an Fe-S scaffold assembly protein, as well as other S acceptor proteins. The protein is Cysteine desulfurase IscS of Neisseria meningitidis serogroup C / serotype 2a (strain ATCC 700532 / DSM 15464 / FAM18).